Consider the following 92-residue polypeptide: PqqA binding protein (92 aa).

It belongs to the PqqD family. In terms of assembly, monomer. Interacts with PqqE.

It functions in the pathway cofactor biosynthesis; pyrroloquinoline quinone biosynthesis. In terms of biological role, functions as a PqqA binding protein and presents PqqA to PqqE, in the pyrroloquinoline quinone (PQQ) biosynthetic pathway. The protein is PqqA binding protein of Stutzerimonas stutzeri (strain A1501) (Pseudomonas stutzeri).